The primary structure comprises 786 residues: Protein SEY1 (786 aa).

Residues 1 to 684 (MSDLKEAIQL…KRSIVNTTER (684 aa)) are Cytoplasmic-facing. The GB1/RHD3-type G domain maps to 35–262 (GVKYHVISVF…QDASFFKDEY (228 aa)). 45–52 (GSQSSGKS) lines the GTP pocket. Residues 355–375 (KKVYEERRDDLIKQLNTIIDE) adopt a coiled-coil conformation. Residues 685–705 (IPLYMYALVVALGWGRIITIL) form a helical membrane-spanning segment. The Lumenal portion of the chain corresponds to 706–708 (RNP). The chain crosses the membrane as a helical span at residues 709-729 (ATIILSIIVLAGAYFVHKLNL). Over 730–786 (WGPLLQFANQATGQATAVLKQTVRSLVVDEEPKRKILVEPHESEGVDKEPSKNDQHL) the chain is Cytoplasmic. The segment at 765–786 (ILVEPHESEGVDKEPSKNDQHL) is disordered.

It belongs to the TRAFAC class dynamin-like GTPase superfamily. GB1/RHD3 GTPase family. RHD3 subfamily.

The protein localises to the endoplasmic reticulum membrane. In terms of biological role, cooperates with the reticulon proteins and tubule-shaping DP1 family proteins to generate and maintain the structure of the tubular endoplasmic reticulum network. Has GTPase activity, which is required for its function in ER organization. This Kluyveromyces lactis (strain ATCC 8585 / CBS 2359 / DSM 70799 / NBRC 1267 / NRRL Y-1140 / WM37) (Yeast) protein is Protein SEY1.